The following is a 607-amino-acid chain: SNW/SKI-interacting protein A (607 aa).

Disordered stretches follow at residues 29-77 (ERYG…GGAF), 178-205 (AQPKNVPTHDSESKFIKYKPSQQSAAFN), 217-265 (EMAQ…IPPC), 327-434 (LQLK…DRDR), and 516-607 (KVMK…ERGR). Over residues 35–49 (SAQSDAAAAAAKPSG) the composition is skewed to low complexity. An SNW region spans residues 190–353 (SKFIKYKPSQ…QKARMERTGA (164 aa)). Residues 240-251 (PPVPVMHSPPRP) are compositionally biased toward pro residues. 2 coiled-coil regions span residues 313 to 349 (AREAVQMRSKVQRELQLKEKERKEQELRALAQKARME) and 391 to 418 (EREARIERDRIREERRRERERERRLEAR). Composition is skewed to basic and acidic residues over residues 327–339 (LQLKEKERKEQEL), 379–434 (EQPR…DRDR), 516–527 (KVMKTDRFKPDK), 535–550 (RSGKRDRPVEFDKQEE), and 562–571 (EVKKGKKAVE).

Belongs to the SNW family. In terms of assembly, interacts with FLO6/SIP4. Interacts with DIS1. In terms of tissue distribution, widely expressed.

It is found in the nucleus. Acts as a positive regulator of drought and salt tolerance. Acts as a positive regulator of cell viability. This chain is SNW/SKI-interacting protein A, found in Oryza sativa subsp. japonica (Rice).